The following is a 395-amino-acid chain: Imidazolonepropionase (395 aa).

His-63 and His-65 together coordinate Fe(3+). Residues His-63 and His-65 each contribute to the Zn(2+) site. Residues Arg-72, Tyr-135, and His-168 each coordinate 4-imidazolone-5-propanoate. Tyr-135 serves as a coordination point for N-formimidoyl-L-glutamate. Residue His-233 participates in Fe(3+) binding. Residue His-233 coordinates Zn(2+). Gln-236 is a binding site for 4-imidazolone-5-propanoate. Fe(3+) is bound at residue Asp-308. Position 308 (Asp-308) interacts with Zn(2+). N-formimidoyl-L-glutamate contacts are provided by Asn-310 and Gly-312. Thr-313 serves as a coordination point for 4-imidazolone-5-propanoate.

Belongs to the metallo-dependent hydrolases superfamily. HutI family. Zn(2+) serves as cofactor. Requires Fe(3+) as cofactor.

It localises to the cytoplasm. The enzyme catalyses 4-imidazolone-5-propanoate + H2O = N-formimidoyl-L-glutamate. It functions in the pathway amino-acid degradation; L-histidine degradation into L-glutamate; N-formimidoyl-L-glutamate from L-histidine: step 3/3. Functionally, catalyzes the hydrolytic cleavage of the carbon-nitrogen bond in imidazolone-5-propanoate to yield N-formimidoyl-L-glutamate. It is the third step in the universal histidine degradation pathway. The chain is Imidazolonepropionase from Cereibacter sphaeroides (strain ATCC 17029 / ATH 2.4.9) (Rhodobacter sphaeroides).